The following is a 1238-amino-acid chain: MAEPRMPRPAISPTRDKSHSPYRESPSRRLRDVETGYNPPQNPPYPPQRNGTEPYPPSPSSRTADWEPIMSNPNPMSQSDLGRKKSLIRPERNRIDRDHPNYYYRKHAANMEVLPSTTGNDPVVEDLAEHRTVSSGSTQQDTSIEEEVVGNPQKSRMPGKLEPVGKKKAPRKLVRKDTRNLTEEEKRRQKELDKIKPPSIWNIYCAVVTFWAPDCLLQCFGMPARAQRRAWKEKVGLISIILLIAAFVGFLTFGFTQAVCAAPGLRLKINHVDRSYMIFHGGAYNLDGSMHPAARGIPLDANVLYDLPHKYGGQDGSFMFQKVNGACKGLITLAEGSDVPTNSDGDLAWYFPCTAFNQDGSSEVNLTSPYYLGYACHTTAKARNTFYSLKKAGDVYFTWDDIKNKSRNLAVYSGSVVDLDLLKWFNKSQVAWPQQFDDLRENGRVRGMDLTHVLQSATDKQVGRCLTQIAKVGSIDTESVGCIASKVVLYVSLVFILAIVAAKFFLALAFQWFLARRFAAAKTSQTSDPKKRAKQIEDWTDDIYKPAPKITDPASTVTGSDGRTSKRGSMFLPQTSRFTSPYAVDRRSSRPPPTTMTSQSSNAKLLPGGNPYKSGFNSSQNTLDLHSRMSVGASRSSLLLSGQETRYSAVMDNLDPNGPVGFIHENVVPQPPPEWQPFGYPLAHVICLVTAYSEGEDGIRTTLDSIATTDYPNSHKAILVVCDGMIKGKGEAQSTPDIVLGMMGDFVIAPEDVQAFSYVAVSSGAKRHNMAKVYAGFYDYGPKSRIDPTKQQRVPMMVVVKCGTPDEATKSKPGNRGKRDSQIILMSFLQKVMFDERMTELEYEMFNGLWKVTGMSPDFYEMVLMVDADTKVFPDSLTHMVSAMVKDPEIMGLCGETKIANKNASWVSRIQVFEYFISHHLSKSFESVFGGVTCLPGCFCMYRIKSPKGGQNYWVPILANPDIVEHYSENVVDTLHKKNLLLLGEDRYLSTLMLKTFPKRKQVFVPQAVCKTTVPDEFKVLLSQRRRWINSTVHNLMELVLVRDLCGTFCFSMQFVVFIELIGTLVLPAAISFTFYLIILSIVKKPVPVIPLVLLALILGLPAILIVLTAHRWSYILWMGIYLLSLPIWNFVLPAYAFWKFDDFSWGETRKTAGEKTKKAGLEYEGEFDSSKITMKRWGDFERGKLDQRSSVCGILVETNLCHLFRTASSGERKCLEPATSYASTERLRFYAWVRTLP.

Disordered regions lie at residues 1-93 and 132-190; these read MAEP…PERN and TVSS…RRQK. Basic and acidic residues predominate over residues 14–34; sequence TRDKSHSPYRESPSRRLRDVE. N-linked (GlcNAc...) asparagine glycosylation occurs at N50. Polar residues-rich tracts occupy residues 71-80 and 133-142; these read SNPNPMSQSD and VSSGSTQQDT. Residues 175–190 show a composition bias toward basic and acidic residues; it reads RKDTRNLTEEEKRRQK. N180 carries an N-linked (GlcNAc...) asparagine glycan. Transmembrane regions (helical) follow at residues 200–220 and 235–255; these read IWNI…LQCF and VGLI…TFGF. Residues N365, N404, and N426 are each glycosylated (N-linked (GlcNAc...) asparagine). The chain crosses the membrane as a helical span at residues 487–507; sequence VVLYVSLVFILAIVAAKFFLA. Disordered stretches follow at residues 548 to 570 and 582 to 606; these read PKIT…RGSM and YAVD…AKLL. Over residues 553–562 the composition is skewed to polar residues; sequence PASTVTGSDG. N617, N903, and N1030 each carry an N-linked (GlcNAc...) asparagine glycan. Transmembrane regions (helical) follow at residues 1062–1082, 1087–1107, and 1115–1135; these read IGTL…ILSI, VPVI…ILIV, and YILW…VLPA.

The protein belongs to the chitin synthase family. Class IV subfamily. Post-translationally, maximal activity requires trypsin activation, suggesting a zymogenic nature.

It localises to the cell membrane. The catalysed reaction is [(1-&gt;4)-N-acetyl-beta-D-glucosaminyl](n) + UDP-N-acetyl-alpha-D-glucosamine = [(1-&gt;4)-N-acetyl-beta-D-glucosaminyl](n+1) + UDP + H(+). Activity is stimulated by Mg(2+), and is more inhibited by polyoxin D than by nikkomycin. In terms of biological role, polymerizes chitin, a structural polymer of the cell wall and septum, by transferring the sugar moiety of UDP-GlcNAc to the non-reducing end of the growing chitin polymer. CHS4 synthesizes a large amount of chitin and appears to play a role in the process of cell separation. CHS4 is particularly well suited for functioning at the higher temperatures associated with its poorly characterized saprophic environment and with human infection. This is Chitin synthase 4 from Exophiala dermatitidis (Black yeast-like fungus).